Here is a 547-residue protein sequence, read N- to C-terminus: Fumarate reductase (CoM/CoB) subunit A (547 aa).

This sequence belongs to the FAD-dependent oxidoreductase 2 family. As to quaternary structure, subunit A of the heterodimeric fumarate reductase of methanogenic Archaea, composed of subunits A (TfrA) and B (TfrB). Requires an oxidized flavin as cofactor.

It is found in the cytoplasm. The catalysed reaction is coenzyme B + coenzyme M + fumarate = coenzyme M-coenzyme B heterodisulfide + succinate. Catalyzes the reduction of fumarate with reduced coenzyme M (CoM-S-H) and coenzyme B (CoB-S-H). In vitro, is able to reduces fumarate with reduced benzyl viologen, oxidize CoM-S-H and CoB-S-H to CoM-S-S-CoB with methylene blue, and reduce CoM-S-S-CoB with reduced benzyl viologen. The enzyme has specificity for the two thiol compounds as the CoB--CoM heterodisulfide reductase. The enzyme is very sensitive to oxygen. The chain is Fumarate reductase (CoM/CoB) subunit A from Methanothermobacter marburgensis (strain ATCC BAA-927 / DSM 2133 / JCM 14651 / NBRC 100331 / OCM 82 / Marburg) (Methanobacterium thermoautotrophicum).